The sequence spans 411 residues: Secretion apparatus protein BsaZ (411 aa).

A run of 4 helical transmembrane segments spans residues 28–48, 80–100, 137–157, and 175–195; these read IVAL…VDLT, IAAP…LVQS, ALLY…LYHA, and IVLT…VLIL. Residues 341–411 are disordered; sequence AANRGGPPPE…APARTGDQNA (71 aa). The segment covering 370-404 has biased composition (low complexity); the sequence is DACADNAFPDDAPPGAAAPNAGSPDGPAPDGGAPA.

This sequence belongs to the type III secretion exporter family.

It localises to the cell membrane. Part of the bsa type III secretion system, is involved in the intracellular replication of invading bacteria inside the host cell. Probably necessary for the lysis of the vacuole membrane and escape into the host cell cytoplasm. The protein is Secretion apparatus protein BsaZ (bsaZ) of Burkholderia pseudomallei (strain 1026b).